The primary structure comprises 320 residues: o-succinylbenzoate synthase (320 aa).

Catalysis depends on Lys133, which acts as the Proton donor. Asp161, Glu190, and Asp213 together coordinate Mg(2+). Lys235 functions as the Proton acceptor in the catalytic mechanism.

It belongs to the mandelate racemase/muconate lactonizing enzyme family. MenC type 1 subfamily. Requires a divalent metal cation as cofactor.

It carries out the reaction (1R,6R)-6-hydroxy-2-succinyl-cyclohexa-2,4-diene-1-carboxylate = 2-succinylbenzoate + H2O. It participates in quinol/quinone metabolism; 1,4-dihydroxy-2-naphthoate biosynthesis; 1,4-dihydroxy-2-naphthoate from chorismate: step 4/7. The protein operates within quinol/quinone metabolism; menaquinone biosynthesis. Its function is as follows. Converts 2-succinyl-6-hydroxy-2,4-cyclohexadiene-1-carboxylate (SHCHC) to 2-succinylbenzoate (OSB). The sequence is that of o-succinylbenzoate synthase from Escherichia coli (strain K12 / MC4100 / BW2952).